Reading from the N-terminus, the 202-residue chain is Dephospho-CoA kinase (202 aa).

In terms of domain architecture, DPCK spans 4-200; sequence VVGVTGGIGS…QRYLAATVAQ (197 aa). Position 12–17 (12–17) interacts with ATP; the sequence is GSGKSA.

This sequence belongs to the CoaE family.

The protein localises to the cytoplasm. It catalyses the reaction 3'-dephospho-CoA + ATP = ADP + CoA + H(+). It participates in cofactor biosynthesis; coenzyme A biosynthesis; CoA from (R)-pantothenate: step 5/5. Its function is as follows. Catalyzes the phosphorylation of the 3'-hydroxyl group of dephosphocoenzyme A to form coenzyme A. The protein is Dephospho-CoA kinase of Idiomarina loihiensis (strain ATCC BAA-735 / DSM 15497 / L2-TR).